A 512-amino-acid polypeptide reads, in one-letter code: ATP synthase subunit alpha, chloroplastic (512 aa).

G170–T177 is a binding site for ATP.

Belongs to the ATPase alpha/beta chains family. As to quaternary structure, F-type ATPases have 2 components, CF(1) - the catalytic core - and CF(0) - the membrane proton channel. CF(1) has five subunits: alpha(3), beta(3), gamma(1), delta(1), epsilon(1). CF(0) has four main subunits: a, b, b' and c.

Its subcellular location is the plastid. It localises to the chloroplast thylakoid membrane. It catalyses the reaction ATP + H2O + 4 H(+)(in) = ADP + phosphate + 5 H(+)(out). Its function is as follows. Produces ATP from ADP in the presence of a proton gradient across the membrane. The alpha chain is a regulatory subunit. The sequence is that of ATP synthase subunit alpha, chloroplastic from Staurastrum punctulatum (Green alga).